A 437-amino-acid chain; its full sequence is UPF0597 protein Shal_0864 (437 aa).

The protein belongs to the UPF0597 family.

In Shewanella halifaxensis (strain HAW-EB4), this protein is UPF0597 protein Shal_0864.